Consider the following 591-residue polypeptide: Aspartate--tRNA ligase (591 aa).

An L-aspartate-binding site is contributed by E173. The interval 197–200 (QLFK) is aspartate. An L-aspartate-binding site is contributed by R219. ATP contacts are provided by residues 219–221 (RDE) and Q228. H448 is an L-aspartate binding site. E482 provides a ligand contact to ATP. R489 provides a ligand contact to L-aspartate. 534–537 (GLDR) contacts ATP.

Belongs to the class-II aminoacyl-tRNA synthetase family. Type 1 subfamily. Homodimer.

The protein resides in the cytoplasm. The enzyme catalyses tRNA(Asp) + L-aspartate + ATP = L-aspartyl-tRNA(Asp) + AMP + diphosphate. Functionally, catalyzes the attachment of L-aspartate to tRNA(Asp) in a two-step reaction: L-aspartate is first activated by ATP to form Asp-AMP and then transferred to the acceptor end of tRNA(Asp). The protein is Aspartate--tRNA ligase of Shewanella amazonensis (strain ATCC BAA-1098 / SB2B).